Consider the following 301-residue polypeptide: MTLDRDAASHVAEVLSEALPYIRRFVGKTLVIKYGGNAMESEELKTGFARDIVLMKAVGINPVVVHGGGPQIGDLLKRLSIESHFIDGMRVTDAATMDVVEMVLGGQVNKDIVNLINRHGGSAIGLTGKDAELIRARKLTVTRQTPEMTTPEIIDIGHVGEVVSVNTDLLNMLVKGDFIPVIAPIGVGANGESYNINADLVAGKVAEALKAEKLMLLTNIAGLMDKQGQVLTGLTTEQVNELIADGTIYGGMLPKIKCALDAVQGGVNSSHIIDGRVPNAVLLEIFTDSGVGTLITNRKRH.

Substrate contacts are provided by residues 68-69 (GG), R90, and N195.

Belongs to the acetylglutamate kinase family. ArgB subfamily.

It localises to the cytoplasm. It catalyses the reaction N-acetyl-L-glutamate + ATP = N-acetyl-L-glutamyl 5-phosphate + ADP. It functions in the pathway amino-acid biosynthesis; L-arginine biosynthesis; N(2)-acetyl-L-ornithine from L-glutamate: step 2/4. Catalyzes the ATP-dependent phosphorylation of N-acetyl-L-glutamate. This chain is Acetylglutamate kinase, found in Pseudomonas entomophila (strain L48).